Reading from the N-terminus, the 213-residue chain is Large ribosomal subunit protein uL3 (213 aa).

This sequence belongs to the universal ribosomal protein uL3 family. Part of the 50S ribosomal subunit. Forms a cluster with proteins L14 and L19.

Its function is as follows. One of the primary rRNA binding proteins, it binds directly near the 3'-end of the 23S rRNA, where it nucleates assembly of the 50S subunit. In Bifidobacterium longum (strain DJO10A), this protein is Large ribosomal subunit protein uL3.